The chain runs to 298 residues: Type II methyltransferase M.MjaIV (298 aa).

It catalyses the reaction a 2'-deoxyadenosine in DNA + S-adenosyl-L-methionine = an N(6)-methyl-2'-deoxyadenosine in DNA + S-adenosyl-L-homocysteine + H(+). A methylase that recognizes the double-stranded sequence 5'-GTNNAC-3', methylates A-5 on both strands, and protects the DNA from cleavage by the MjaIV endonuclease. The sequence is that of Type II methyltransferase M.MjaIV (mjaIVMP) from Methanocaldococcus jannaschii (strain ATCC 43067 / DSM 2661 / JAL-1 / JCM 10045 / NBRC 100440) (Methanococcus jannaschii).